Reading from the N-terminus, the 204-residue chain is Putative glutathione S-transferase alpha-3 (204 aa).

T2 carries the post-translational modification N-acetylthreonine. The GST N-terminal domain maps to 2–79; the sequence is TKPQLSYFKV…YIASQHDFVG (78 aa). Glutathione is bound by residues Y8, 49 to 50, and 63 to 64; these read QL and QS. The 122-residue stretch at 81–202 folds into the GST C-terminal domain; it reads TPEEKALVDE…YLKNRPITER (122 aa).

Belongs to the GST superfamily. Alpha family.

The enzyme catalyses RX + glutathione = an S-substituted glutathione + a halide anion + H(+). Its function is as follows. Conjugation of reduced glutathione to a wide number of exogenous and endogenous hydrophobic electrophiles. The protein is Putative glutathione S-transferase alpha-3 (gsta3) of Dictyostelium discoideum (Social amoeba).